A 668-amino-acid polypeptide reads, in one-letter code: Threonine--tRNA ligase (668 aa).

The 64-residue stretch at 1–64 (MSEAIFLTFP…ADGKIEIITR (64 aa)) folds into the TGS domain. The segment at 245 to 553 (DHRKLGREMD…LIENFAGHLP (309 aa)) is catalytic. Cys347, His398, and His530 together coordinate Zn(2+).

Belongs to the class-II aminoacyl-tRNA synthetase family. Homodimer. It depends on Zn(2+) as a cofactor.

The protein localises to the cytoplasm. The enzyme catalyses tRNA(Thr) + L-threonine + ATP = L-threonyl-tRNA(Thr) + AMP + diphosphate + H(+). Functionally, catalyzes the attachment of threonine to tRNA(Thr) in a two-step reaction: L-threonine is first activated by ATP to form Thr-AMP and then transferred to the acceptor end of tRNA(Thr). Also edits incorrectly charged L-seryl-tRNA(Thr). The chain is Threonine--tRNA ligase from Rhizobium leguminosarum bv. trifolii (strain WSM2304).